The chain runs to 248 residues: UPF0736 protein BT9727_1080 (248 aa).

This sequence belongs to the UPF0736 family.

The protein is UPF0736 protein BT9727_1080 of Bacillus thuringiensis subsp. konkukian (strain 97-27).